We begin with the raw amino-acid sequence, 391 residues long: Multidrug resistance protein MdtL (391 aa).

Residues 1–3 are Cytoplasmic-facing; that stretch reads MSR. A helical transmembrane segment spans residues 4-24; the sequence is FLICSFALVLLYPAGIDMYLV. Residues 25–41 are Periplasmic-facing; the sequence is GLPRIAADLNASEAQLH. A helical membrane pass occupies residues 42–62; sequence IAFSVYLAGMAAAMLFAGKVA. The Cytoplasmic portion of the chain corresponds to 63–68; sequence DRSGRK. A helical membrane pass occupies residues 69–89; that stretch reads PVAIPGAALFIITSVFCSLAE. The Periplasmic segment spans residues 90–92; it reads TST. A helical transmembrane segment spans residues 93 to 113; sequence LFLAGRFLQGLGAGCCYVVAF. The Cytoplasmic segment spans residues 114–130; the sequence is AILRDTLDDRRRAKVLS. Residues 131 to 151 traverse the membrane as a helical segment; it reads LLNGITCIIPVLAPVLGHLIM. The Periplasmic portion of the chain corresponds to 152-157; it reads LKFPWQ. Residues 158-178 form a helical membrane-spanning segment; sequence SLFWTMAIMGIAVLMLSLFIL. Topologically, residues 179–198 are cytoplasmic; that stretch reads KETRPAAPAASDKSRENSES. The helical transmembrane segment at 199 to 221 threads the bilayer; sequence LLNRFFLSRVVITTLSVSVILTF. Residues 222–244 are Periplasmic-facing; sequence VNTSPVLLMEIMGFERGEYATIM. Residues 245–265 form a helical membrane-spanning segment; it reads ALTAGVSMTVSFSTPFALGIF. At 266–268 the chain is on the cytoplasmic side; sequence KPR. A helical transmembrane segment spans residues 269–289; the sequence is TLMITSQVLFLAAGITLTVSP. Residues 290 to 292 lie on the Periplasmic side of the membrane; that stretch reads SHA. Residues 293–313 traverse the membrane as a helical segment; that stretch reads VSLFGITLICAGFSVGFGVAM. The Cytoplasmic portion of the chain corresponds to 314–330; that stretch reads SQALGPFSLRAGVASST. The helical transmembrane segment at 331–351 threads the bilayer; that stretch reads LGIAQVCGSSLWIWLAAVVGI. Over 352 to 355 the chain is Periplasmic; it reads SAWN. Residues 356–376 form a helical membrane-spanning segment; sequence MLIGILIACSIVSLLLIMFVA. The Cytoplasmic segment spans residues 377–391; the sequence is PGRPVTAHEEIHHHA.

It belongs to the major facilitator superfamily. DHA1 family. MdtL (TC 2.A.1.2.22) subfamily.

Its subcellular location is the cell inner membrane. In terms of biological role, confers resistance to chloramphenicol. This Escherichia coli O157:H7 protein is Multidrug resistance protein MdtL (mdtL).